The primary structure comprises 465 residues: Ribulose bisphosphate carboxylase large chain (465 aa).

Lysine 4 is modified (N6,N6,N6-trimethyllysine). Residues asparagine 113 and threonine 163 each contribute to the substrate site. Lysine 165 (proton acceptor) is an active-site residue. Position 167 (lysine 167) interacts with substrate. Residues lysine 191, aspartate 193, and glutamate 194 each contribute to the Mg(2+) site. Lysine 191 bears the N6-carboxylysine mark. Residue histidine 284 is the Proton acceptor of the active site. Substrate contacts are provided by arginine 285, histidine 317, and serine 369.

The protein belongs to the RuBisCO large chain family. Type I subfamily. As to quaternary structure, heterohexadecamer of 8 large chains and 8 small chains; disulfide-linked. The disulfide link is formed within the large subunit homodimers. Mg(2+) is required as a cofactor. The disulfide bond which can form in the large chain dimeric partners within the hexadecamer appears to be associated with oxidative stress and protein turnover.

Its subcellular location is the plastid. It localises to the chloroplast. The enzyme catalyses 2 (2R)-3-phosphoglycerate + 2 H(+) = D-ribulose 1,5-bisphosphate + CO2 + H2O. It catalyses the reaction D-ribulose 1,5-bisphosphate + O2 = 2-phosphoglycolate + (2R)-3-phosphoglycerate + 2 H(+). Its function is as follows. RuBisCO catalyzes two reactions: the carboxylation of D-ribulose 1,5-bisphosphate, the primary event in carbon dioxide fixation, as well as the oxidative fragmentation of the pentose substrate in the photorespiration process. Both reactions occur simultaneously and in competition at the same active site. In Cornus canadensis (Bunchberry dogwood), this protein is Ribulose bisphosphate carboxylase large chain.